The sequence spans 191 residues: Large ribosomal subunit protein uL3 (191 aa).

The tract at residues 115–137 (GGPASHGSRFHRRHGSIGNREWP) is disordered.

The protein belongs to the universal ribosomal protein uL3 family. Part of the 50S ribosomal subunit. Forms a cluster with proteins L14 and L19.

In terms of biological role, one of the primary rRNA binding proteins, it binds directly near the 3'-end of the 23S rRNA, where it nucleates assembly of the 50S subunit. The chain is Large ribosomal subunit protein uL3 (rplC) from Campylobacter jejuni subsp. jejuni serotype O:2 (strain ATCC 700819 / NCTC 11168).